The chain runs to 380 residues: MTIIEERATDTGMATVPLPAEGEIGLVHIGALTLENGTVLPDVTIAVQRWGELAPDRGNVVMVLHALTGDSHVTGPAGDGHPTAGWWDGVAGPGAPIDTDHWCAIATNVLGGCRGSTGPGSLAPDGKPWGSRFPQITIRDQVAADRAALAALGITEVAAVVGGSMGGARALEWLVTHPDDVRAGLVLAVGARATADQIGTQSTQVAAIKADPDWQGGDYHGTGRAPTEGMEIARRFAHLTYRGEEELDDRFANTPQDDEDPLTGGRYAVQSYLEYQGGKLARRFDPGTYVVLSDALSSHDVGRGRGGVEAALRSCPVPVVVGGITSDRLYPIRLQQELAELLPGCQGLDVVDSIYGHDGFLVETELVGKLIRRTLELAQR.

The AB hydrolase-1 domain maps to 59–363 (NVVMVLHALT…IYGHDGFLVE (305 aa)). Ser-164 serves as the catalytic Nucleophile. Arg-234 contributes to the substrate binding site. Active-site residues include Asp-327 and His-357. Substrate is bound at residue Asp-358.

It belongs to the AB hydrolase superfamily. MetX family. As to quaternary structure, homodimer.

It localises to the cytoplasm. The enzyme catalyses L-homoserine + acetyl-CoA = O-acetyl-L-homoserine + CoA. The protein operates within amino-acid biosynthesis; L-methionine biosynthesis via de novo pathway; O-acetyl-L-homoserine from L-homoserine: step 1/1. Functionally, transfers an acetyl group from acetyl-CoA to L-homoserine, forming acetyl-L-homoserine. In Mycolicibacterium smegmatis (strain ATCC 700084 / mc(2)155) (Mycobacterium smegmatis), this protein is Homoserine O-acetyltransferase.